The following is a 461-amino-acid chain: Siroheme synthase (461 aa).

Residues 1–204 form a precorrin-2 dehydrogenase /sirohydrochlorin ferrochelatase region; that stretch reads MDYFPIFCQL…GDTTQAQQQV (204 aa). NAD(+)-binding positions include 22–23 and 43–44; these read EV and GR. Position 128 is a phosphoserine (Ser-128). Positions 216-461 are uroporphyrinogen-III C-methyltransferase; it reads GEVTLVGAGP…NWFRCEAASA (246 aa). Residue Pro-225 coordinates S-adenosyl-L-methionine. Asp-248 serves as the catalytic Proton acceptor. Lys-270 functions as the Proton donor in the catalytic mechanism. S-adenosyl-L-methionine is bound by residues 301 to 303, Ile-306, 331 to 332, Met-382, and Gly-411; these read GGD and TA.

In the N-terminal section; belongs to the precorrin-2 dehydrogenase / sirohydrochlorin ferrochelatase family. It in the C-terminal section; belongs to the precorrin methyltransferase family.

The catalysed reaction is uroporphyrinogen III + 2 S-adenosyl-L-methionine = precorrin-2 + 2 S-adenosyl-L-homocysteine + H(+). It carries out the reaction precorrin-2 + NAD(+) = sirohydrochlorin + NADH + 2 H(+). The enzyme catalyses siroheme + 2 H(+) = sirohydrochlorin + Fe(2+). It functions in the pathway cofactor biosynthesis; adenosylcobalamin biosynthesis; precorrin-2 from uroporphyrinogen III: step 1/1. The protein operates within cofactor biosynthesis; adenosylcobalamin biosynthesis; sirohydrochlorin from precorrin-2: step 1/1. It participates in porphyrin-containing compound metabolism; siroheme biosynthesis; precorrin-2 from uroporphyrinogen III: step 1/1. Its pathway is porphyrin-containing compound metabolism; siroheme biosynthesis; siroheme from sirohydrochlorin: step 1/1. It functions in the pathway porphyrin-containing compound metabolism; siroheme biosynthesis; sirohydrochlorin from precorrin-2: step 1/1. Multifunctional enzyme that catalyzes the SAM-dependent methylations of uroporphyrinogen III at position C-2 and C-7 to form precorrin-2 via precorrin-1. Then it catalyzes the NAD-dependent ring dehydrogenation of precorrin-2 to yield sirohydrochlorin. Finally, it catalyzes the ferrochelation of sirohydrochlorin to yield siroheme. The protein is Siroheme synthase of Edwardsiella ictaluri (strain 93-146).